We begin with the raw amino-acid sequence, 514 residues long: Alpha-1B adrenergic receptor (514 aa).

At 1–45 (MNPDLDTGHNTSAPAHWGELKDANFTGPNQTSSNSTLPQLDVTRA) the chain is on the extracellular side. N-linked (GlcNAc...) asparagine glycans are attached at residues asparagine 10, asparagine 24, asparagine 29, and asparagine 34. Residues 46–69 (ISVGCLGAFILFAIVGNILVILSV) form a helical membrane-spanning segment. Residues 70–82 (ACNRHLRTPTNYF) are Cytoplasmic-facing. Residues 83 to 104 (IVNLAIADLLLSFTDLPFSATL) traverse the membrane as a helical segment. Residues 105–114 (EVLGYWVLGR) are Extracellular-facing. The chain crosses the membrane as a helical span at residues 115–140 (IFCDIWAAVDVLCCTASILSLCAISI). Cysteine 117 and cysteine 194 form a disulfide bridge. Over 141–160 (DRYIGVRYSLQYPTLVTRRK) the chain is Cytoplasmic. Residues 161-183 (AILALLSVWVLSTVISIGPLLGW) form a helical membrane-spanning segment. Residues 184 to 200 (KEPAPNDDKECGVTEEP) are Extracellular-facing. The chain crosses the membrane as a helical span at residues 201-223 (FYALFSSLGSFYIPLAVILVMYC). At 224–294 (RVYIVAKRTT…FSREKKAAKT (71 aa)) the chain is on the cytoplasmic side. Threonine 263 carries the post-translational modification Phosphothreonine. Residues 295-318 (LGIVVGMFILCWLPFFIALPLGSL) form a helical membrane-spanning segment. Residues 319 to 325 (FSTLKPP) are Extracellular-facing. Residues 326–350 (DAVFKVVFWLGYFNSCLNPIIYPCS) form a helical membrane-spanning segment. The Cytoplasmic segment spans residues 351-514 (SKEFKRAFMR…SNMPLAPGHF (164 aa)). Cysteine 364 carries S-palmitoyl cysteine lipidation. The Nuclear localization signal motif lies at 367-377 (RGGRRRRRRRR). 2 disordered regions span residues 391-429 (GGSLERSQSRKDSLDDSGSCMSGSQRTLPSASPSPGYLG) and 473-514 (LGEP…PGHF). Residues 409–423 (SCMSGSQRTLPSASP) are compositionally biased toward polar residues.

It belongs to the G-protein coupled receptor 1 family. Adrenergic receptor subfamily. ADRA1B sub-subfamily. Homo- and heterooligomer. Heterooligomerizes with ADRA1B homooligomers in cardiac myocytes. Interacts with CAVIN4.

Its subcellular location is the nucleus membrane. It is found in the cell membrane. It localises to the cytoplasm. The protein localises to the membrane. The protein resides in the caveola. Its function is as follows. This alpha-adrenergic receptor mediates its action by association with G proteins that activate a phosphatidylinositol-calcium second messenger system. Its effect is mediated by G(q) and G(11) proteins. Nuclear ADRA1A-ADRA1B heterooligomers regulate phenylephrine (PE)-stimulated ERK signaling in cardiac myocytes. The chain is Alpha-1B adrenergic receptor (Adra1b) from Mus musculus (Mouse).